Consider the following 904-residue polypeptide: Phosphoenolpyruvate carboxylase (904 aa).

The interval 52 to 71 (ISRRESDAPPSTLSEQLTGR) is disordered. The span at 60-70 (PPSTLSEQLTG) shows a compositional bias: polar residues. Residues His-151 and Lys-570 contribute to the active site.

The protein belongs to the PEPCase type 1 family. Mg(2+) serves as cofactor.

It carries out the reaction oxaloacetate + phosphate = phosphoenolpyruvate + hydrogencarbonate. In terms of biological role, forms oxaloacetate, a four-carbon dicarboxylic acid source for the tricarboxylic acid cycle. This Xanthomonas euvesicatoria pv. vesicatoria (strain 85-10) (Xanthomonas campestris pv. vesicatoria) protein is Phosphoenolpyruvate carboxylase.